Reading from the N-terminus, the 245-residue chain is NAD(P)H-quinone oxidoreductase subunit K (245 aa).

[4Fe-4S] cluster is bound by residues Cys-58, Cys-59, Cys-123, and Cys-154.

It belongs to the complex I 20 kDa subunit family. As to quaternary structure, NDH-1 can be composed of about 15 different subunits; different subcomplexes with different compositions have been identified which probably have different functions. [4Fe-4S] cluster serves as cofactor.

It is found in the cellular thylakoid membrane. The catalysed reaction is a plastoquinone + NADH + (n+1) H(+)(in) = a plastoquinol + NAD(+) + n H(+)(out). It carries out the reaction a plastoquinone + NADPH + (n+1) H(+)(in) = a plastoquinol + NADP(+) + n H(+)(out). NDH-1 shuttles electrons from an unknown electron donor, via FMN and iron-sulfur (Fe-S) centers, to quinones in the respiratory and/or the photosynthetic chain. The immediate electron acceptor for the enzyme in this species is believed to be plastoquinone. Couples the redox reaction to proton translocation, and thus conserves the redox energy in a proton gradient. Cyanobacterial NDH-1 also plays a role in inorganic carbon-concentration. This Trichormus variabilis (strain ATCC 29413 / PCC 7937) (Anabaena variabilis) protein is NAD(P)H-quinone oxidoreductase subunit K.